A 547-amino-acid polypeptide reads, in one-letter code: Cdc42-interacting protein 4 (547 aa).

Residues 1–117 (MDWGTELWDQ…EMKQERKMHF (117 aa)) are required for translocation to the plasma membrane in response to insulin, podosome formation and interaction with AKAP9 and microtubules. The region spanning 1 to 264 (MDWGTELWDQ…AAESVDAKND (264 aa)) is the F-BAR domain. Residues 67–259 (FSQQQSFVQL…EGMKVAAESV (193 aa)) adopt a coiled-coil conformation. An interaction with CDC42 region spans residues 293–483 (RVPSDSSLGT…YTEFDEDFEE (191 aa)). The interval 293–547 (RVPSDSSLGT…PTSYLRVTLN (255 aa)) is interaction with PDE6G. Positions 294–323 (VPSDSSLGTPDGRPELRAASSRSRAKRWPF) are disordered. Phosphoserine occurs at positions 296, 298, and 299. The stretch at 332 to 425 (TEDFSHLPPE…ESRVLSNRGD (94 aa)) forms a coiled coil. One can recognise an REM-1 domain in the interval 337-414 (HLPPEQQRKR…VQKYEAWLAE (78 aa)). Residues 415–547 (AESRVLSNRG…PTSYLRVTLN (133 aa)) form a required for interaction with FASLG and localization to lysosomes region. The disordered stretch occupies residues 420–485 (LSNRGDSLSR…EFDEDFEEPA (66 aa)). Phosphoserine is present on S426. Residues 431 to 487 (TRPPDPPTTAPPDSSSSSNNSGSQDNKESSEEPPSEEGQDTPIYTEFDEDFEEPASP) form an interaction with DNM2 and WASL region. Residues 441–451 (PPDSSSSSNNS) show a composition bias toward low complexity. Residues 476 to 547 (EFDEDFEEPA…PTSYLRVTLN (72 aa)) are interaction with DNM1 and WASL. Residues 484 to 547 (PASPIGQCVA…PTSYLRVTLN (64 aa)) are required for podosome formation. Positions 486 to 547 (SPIGQCVAIY…PTSYLRVTLN (62 aa)) constitute an SH3 domain. Residues 490–547 (QCVAIYHFEGSSEGTVSMSEGEDLSLMEEDKGDGWTRVRRKQGGEGYVPTSYLRVTLN) are interaction with WAS. The interval 492–547 (VAIYHFEGSSEGTVSMSEGEDLSLMEEDKGDGWTRVRRKQGGEGYVPTSYLRVTLN) is interaction with ARHGAP17, DAAM1, DIAPH1 and DIAPH2.

It belongs to the FNBP1 family. Homodimerizes, the dimers can polymerize end-to-end to form filamentous structures. Interacts specifically with GTP-bound CDC42 and RHOQ. Interacts with AKAP9, ARHGAP17, DAAM1, DIAPH1, DIAPH2, DNM1, DNM2, FASLG/FASL, GAPVD1, LYN, microtubules, SRC, WAS/WASP and WASL/N-WASP. Interacts with the ligand binding domain of the thyroid receptor (TR) in the presence of thyroid hormone. May interact with CTNNB1 and HD/HTT. Interacts with PDE6G. In terms of tissue distribution, expressed in adrenal gland, aorta, brain, heart, kidney, liver, skeletal muscle and spleen.

Its subcellular location is the cytoplasm. It is found in the cytoskeleton. It localises to the cell cortex. The protein localises to the lysosome. The protein resides in the golgi apparatus. Its subcellular location is the cell membrane. It is found in the cell projection. It localises to the phagocytic cup. Functionally, required to coordinate membrane tubulation with reorganization of the actin cytoskeleton during endocytosis. Also acts as a link between CDC42 signaling and regulation of the actin cytoskeleton. Binds to lipids such as phosphatidylinositol 4,5-bisphosphate and phosphatidylserine and promotes membrane invagination and the formation of tubules. Also enhances actin polymerization in the vicinity of membrane tubules by recruiting WASL/N-WASP which in turn activates the Arp2/3 complex. Actin polymerization and dynamin may promote the fission of membrane tubules to form endocytic vesicles. Required for the formation of podosomes, actin-rich adhesion structures specific to monocyte-derived cells. Required for translocation of GLUT4 to the plasma membrane in response to insulin signaling. May be required for the lysosomal retention of FASLG/FASL. This chain is Cdc42-interacting protein 4 (Trip10), found in Rattus norvegicus (Rat).